The primary structure comprises 282 residues: NADPH-dependent 7-cyano-7-deazaguanine reductase (282 aa).

Substrate is bound at residue 88-90; that stretch reads IES. NADPH is bound at residue 90–91; sequence SK. Cys190 (thioimide intermediate) is an active-site residue. The Proton donor role is filled by Asp197. 229 to 230 is a substrate binding site; sequence HE. 258–259 serves as a coordination point for NADPH; that stretch reads RG.

This sequence belongs to the GTP cyclohydrolase I family. QueF type 2 subfamily. In terms of assembly, homodimer.

The protein localises to the cytoplasm. It carries out the reaction 7-aminomethyl-7-carbaguanine + 2 NADP(+) = 7-cyano-7-deazaguanine + 2 NADPH + 3 H(+). It participates in tRNA modification; tRNA-queuosine biosynthesis. In terms of biological role, catalyzes the NADPH-dependent reduction of 7-cyano-7-deazaguanine (preQ0) to 7-aminomethyl-7-deazaguanine (preQ1). This is NADPH-dependent 7-cyano-7-deazaguanine reductase from Escherichia coli O81 (strain ED1a).